The chain runs to 106 residues: Replication restart protein PriB (106 aa).

Residues Thr-4–Asp-103 enclose the SSB domain.

It belongs to the PriB family. As to quaternary structure, homodimer. Interacts with PriA and DnaT. Component of the replication restart primosome. Primosome assembly occurs via a 'hand-off' mechanism. PriA binds to replication forks, subsequently PriB then DnaT bind; DnaT then displaces ssDNA to generate the helicase loading substrate.

Functionally, involved in the restart of stalled replication forks, which reloads the replicative helicase on sites other than the origin of replication; the PriA-PriB pathway is the major replication restart pathway. During primosome assembly it facilitates complex formation between PriA and DnaT on DNA; stabilizes PriA on DNA. Stimulates the DNA unwinding activity of PriA helicase. The sequence is that of Replication restart protein PriB from Yersinia pestis.